The sequence spans 236 residues: Small ribosomal subunit protein uS2c (236 aa).

The protein belongs to the universal ribosomal protein uS2 family.

It localises to the plastid. The protein resides in the chloroplast. The protein is Small ribosomal subunit protein uS2c (rps2) of Illicium oligandrum (Star anise).